The following is a 164-amino-acid chain: UPF0251 protein MA_0157 (164 aa).

The interval 91 to 124 is disordered; it reads GDYRMPRGDGTGPAGQGPVGGGRSRGQGKGRGGR. Residues 99–115 show a composition bias toward gly residues; the sequence is DGTGPAGQGPVGGGRSR.

The protein belongs to the UPF0251 family.

This is UPF0251 protein MA_0157 from Methanosarcina acetivorans (strain ATCC 35395 / DSM 2834 / JCM 12185 / C2A).